A 236-amino-acid polypeptide reads, in one-letter code: Phosphoribosylaminoimidazole-succinocarboxamide synthase (236 aa).

Belongs to the SAICAR synthetase family.

The catalysed reaction is 5-amino-1-(5-phospho-D-ribosyl)imidazole-4-carboxylate + L-aspartate + ATP = (2S)-2-[5-amino-1-(5-phospho-beta-D-ribosyl)imidazole-4-carboxamido]succinate + ADP + phosphate + 2 H(+). Its pathway is purine metabolism; IMP biosynthesis via de novo pathway; 5-amino-1-(5-phospho-D-ribosyl)imidazole-4-carboxamide from 5-amino-1-(5-phospho-D-ribosyl)imidazole-4-carboxylate: step 1/2. The polypeptide is Phosphoribosylaminoimidazole-succinocarboxamide synthase (Rickettsia canadensis (strain McKiel)).